A 301-amino-acid chain; its full sequence is Protease HtpX (301 aa).

2 helical membrane-spanning segments follow: residues 4-24 (IGLF…ILSL) and 38-58 (LGNL…ISLL). His147 lines the Zn(2+) pocket. Glu148 is a catalytic residue. His151 is a Zn(2+) binding site. 2 helical membrane passes run 155 to 175 (GDMV…MFFA) and 200 to 220 (FAIT…IVMW). A Zn(2+)-binding site is contributed by Glu226.

It belongs to the peptidase M48B family. Zn(2+) is required as a cofactor.

It is found in the cell inner membrane. This Acinetobacter baylyi (strain ATCC 33305 / BD413 / ADP1) protein is Protease HtpX.